We begin with the raw amino-acid sequence, 96 residues long: Large ribosomal subunit protein bL28 (96 aa).

The segment covering 1–22 has biased composition (polar residues); sequence MSRSCELTGKGVQSGNNVSHAN. The segment at 1-24 is disordered; sequence MSRSCELTGKGVQSGNNVSHANNK.

This sequence belongs to the bacterial ribosomal protein bL28 family.

The sequence is that of Large ribosomal subunit protein bL28 from Rhizobium meliloti (strain 1021) (Ensifer meliloti).